The primary structure comprises 305 residues: Homoserine O-acetyltransferase (305 aa).

Residue Cys-142 is the Acyl-thioester intermediate of the active site. Substrate contacts are provided by Lys-163 and Ser-192. His-235 serves as the catalytic Proton acceptor. Glu-237 is a catalytic residue. A substrate-binding site is contributed by Arg-249.

The protein belongs to the MetA family.

It localises to the cytoplasm. It carries out the reaction L-homoserine + acetyl-CoA = O-acetyl-L-homoserine + CoA. The protein operates within amino-acid biosynthesis; L-methionine biosynthesis via de novo pathway; O-acetyl-L-homoserine from L-homoserine: step 1/1. Transfers an acetyl group from acetyl-CoA to L-homoserine, forming acetyl-L-homoserine. The polypeptide is Homoserine O-acetyltransferase (Cereibacter sphaeroides (strain KD131 / KCTC 12085) (Rhodobacter sphaeroides)).